The primary structure comprises 1295 residues: Phosphoribosylformylglycinamidine synthase (1295 aa).

Positions 305–327 are disordered; sequence WPGAATGSGGEIRDEGATGRGAK. ATP-binding positions include 307 to 318, 386 to 388, and alanine 678; these read GAATGSGGEIRD and TGY. 4 residues coordinate Mg(2+): aspartate 679, glutamate 718, asparagine 722, and aspartate 884. ATP is bound at residue serine 886. The Glutamine amidotransferase type-1 domain occupies 1042–1295; it reads VAVLREQGVN…IFRNARKQLG (254 aa). The active-site Nucleophile is cysteine 1135. Active-site residues include histidine 1260 and glutamate 1262.

This sequence in the N-terminal section; belongs to the FGAMS family. Monomer.

It is found in the cytoplasm. It carries out the reaction N(2)-formyl-N(1)-(5-phospho-beta-D-ribosyl)glycinamide + L-glutamine + ATP + H2O = 2-formamido-N(1)-(5-O-phospho-beta-D-ribosyl)acetamidine + L-glutamate + ADP + phosphate + H(+). It functions in the pathway purine metabolism; IMP biosynthesis via de novo pathway; 5-amino-1-(5-phospho-D-ribosyl)imidazole from N(2)-formyl-N(1)-(5-phospho-D-ribosyl)glycinamide: step 1/2. Its function is as follows. Phosphoribosylformylglycinamidine synthase involved in the purines biosynthetic pathway. Catalyzes the ATP-dependent conversion of formylglycinamide ribonucleotide (FGAR) and glutamine to yield formylglycinamidine ribonucleotide (FGAM) and glutamate. In Salmonella typhimurium (strain LT2 / SGSC1412 / ATCC 700720), this protein is Phosphoribosylformylglycinamidine synthase.